The sequence spans 194 residues: Peptidyl-tRNA hydrolase (194 aa).

Tyrosine 17 lines the tRNA pocket. Residue histidine 22 is the Proton acceptor of the active site. Residues tyrosine 69, asparagine 71, and asparagine 117 each contribute to the tRNA site.

This sequence belongs to the PTH family. Monomer.

The protein resides in the cytoplasm. The enzyme catalyses an N-acyl-L-alpha-aminoacyl-tRNA + H2O = an N-acyl-L-amino acid + a tRNA + H(+). Its function is as follows. Hydrolyzes ribosome-free peptidyl-tRNAs (with 1 or more amino acids incorporated), which drop off the ribosome during protein synthesis, or as a result of ribosome stalling. Functionally, catalyzes the release of premature peptidyl moieties from peptidyl-tRNA molecules trapped in stalled 50S ribosomal subunits, and thus maintains levels of free tRNAs and 50S ribosomes. The polypeptide is Peptidyl-tRNA hydrolase (Arthrobacter sp. (strain FB24)).